Here is a 32-residue protein sequence, read N- to C-terminus: Variegin (32 aa).

A disordered region spans residues 1–32; it reads SDQGDVAEPKMHKTAPPFDFEAIPEEYLDDES. Residues 8–14 are contains the active site; the sequence is EPKMHKT. Residue threonine 14 is glycosylated (O-linked (Hex) threonine). Residues 22-32 show a composition bias toward acidic residues; the sequence is AIPEEYLDDES.

In terms of assembly, interacts with human F2 (thrombin); the interaction results in thrombin inhibition.

The protein localises to the secreted. Thrombin inhibitor. Does not inhibit other serine proteases. This Amblyomma variegatum (Tropical bont tick) protein is Variegin.